Consider the following 160-residue polypeptide: Large ribosomal subunit protein uL22c (160 aa).

The protein belongs to the universal ribosomal protein uL22 family. As to quaternary structure, part of the 50S ribosomal subunit.

The protein resides in the plastid. Its subcellular location is the chloroplast. This protein binds specifically to 23S rRNA. In terms of biological role, the globular domain of the protein is located near the polypeptide exit tunnel on the outside of the subunit, while an extended beta-hairpin is found that lines the wall of the exit tunnel in the center of the 70S ribosome. The chain is Large ribosomal subunit protein uL22c (rpl22) from Olimarabidopsis pumila (Dwarf rocket).